The following is a 317-amino-acid chain: Methionyl-tRNA formyltransferase (317 aa).

Position 110–113 (110–113 (SLLP)) interacts with (6S)-5,6,7,8-tetrahydrofolate. A disordered region spans residues 292-317 (RMKGEDFVRGKNVQPGDVLGEANEEN).

The protein belongs to the Fmt family.

The enzyme catalyses L-methionyl-tRNA(fMet) + (6R)-10-formyltetrahydrofolate = N-formyl-L-methionyl-tRNA(fMet) + (6S)-5,6,7,8-tetrahydrofolate + H(+). Its function is as follows. Attaches a formyl group to the free amino group of methionyl-tRNA(fMet). The formyl group appears to play a dual role in the initiator identity of N-formylmethionyl-tRNA by promoting its recognition by IF2 and preventing the misappropriation of this tRNA by the elongation apparatus. In Bacillus velezensis (strain DSM 23117 / BGSC 10A6 / LMG 26770 / FZB42) (Bacillus amyloliquefaciens subsp. plantarum), this protein is Methionyl-tRNA formyltransferase.